A 306-amino-acid chain; its full sequence is Tyrosine recombinase XerC (306 aa).

Positions 10-94 (ARCHSYLQQF…AVKQWGEFLL (85 aa)) constitute a Core-binding (CB) domain. The Tyr recombinase domain occupies 115-294 (PLPKNIDVDS…DFQHLAKVYD (180 aa)). Active-site residues include R154, K178, H246, R249, and H272. Residue Y281 is the O-(3'-phospho-DNA)-tyrosine intermediate of the active site.

The protein belongs to the 'phage' integrase family. XerC subfamily. Forms a cyclic heterotetrameric complex composed of two molecules of XerC and two molecules of XerD.

The protein localises to the cytoplasm. In terms of biological role, site-specific tyrosine recombinase, which acts by catalyzing the cutting and rejoining of the recombining DNA molecules. The XerC-XerD complex is essential to convert dimers of the bacterial chromosome into monomers to permit their segregation at cell division. It also contributes to the segregational stability of plasmids. The sequence is that of Tyrosine recombinase XerC from Shewanella oneidensis (strain ATCC 700550 / JCM 31522 / CIP 106686 / LMG 19005 / NCIMB 14063 / MR-1).